The primary structure comprises 530 residues: Nectin-2 (530 aa).

The signal sequence occupies residues 1–31; the sequence is MARAAVLPPSRLSPTLPLLPLLLLLLQETGA. An Ig-like V-type domain is found at 32–147; the sequence is QDVRVRVLPE…NGTRRGVTWL (116 aa). Topologically, residues 32–351 are extracellular; sequence QDVRVRVLPE…STAGAGATGG (320 aa). The cysteines at positions 54 and 131 are disulfide-linked. Residues Asn128 and Asn138 are each glycosylated (N-linked (GlcNAc...) asparagine). 2 Ig-like C2-type domains span residues 153-247 and 252-337; these read PENH…VTLS and PEVS…VILV. 2 cysteine pairs are disulfide-bonded: Cys174/Cys229 and Cys274/Cys320. N-linked (GlcNAc...) asparagine glycosylation occurs at Asn315. The helical transmembrane segment at 352–372 threads the bilayer; the sequence is IIGGIIAAIIATAVAGTGILI. Topologically, residues 373–530 are cytoplasmic; sequence CRQQRKEQRL…DFFVSRAMYV (158 aa). Positions 382 to 407 are disordered; sequence LQAADEEEELEGPPSYKPPTPKAKLE. Position 401 is a phosphothreonine (Thr401). The residue at position 424 (Ser424) is a Phosphoserine.

The protein belongs to the nectin family. As to quaternary structure, can form trans-heterodimers with NECTIN3. Interacts with CD226 or with PVRIG; these interactions are competitive and have a differential functional outcome on T-cell activation, either positive or negative, respectively. Binds with low affinity to TIGIT. Brain, spinal cord, spleen, kidney, heart and liver.

The protein resides in the cell membrane. Its function is as follows. Modulator of T-cell signaling. Can be either a costimulator of T-cell function, or a coinhibitor, depending on the receptor it binds to. Upon binding to CD226, stimulates T-cell proliferation and cytokine production, including that of IL2, IL5, IL10, IL13, and IFNG. Upon interaction with PVRIG, inhibits T-cell proliferation. These interactions are competitive. Probable cell adhesion protein. In Mus musculus (Mouse), this protein is Nectin-2.